The sequence spans 204 residues: ATP-dependent Clp protease proteolytic subunit (204 aa).

Residue Ser-102 is the Nucleophile of the active site. His-127 is a catalytic residue.

This sequence belongs to the peptidase S14 family. Fourteen ClpP subunits assemble into 2 heptameric rings which stack back to back to give a disk-like structure with a central cavity, resembling the structure of eukaryotic proteasomes.

The protein localises to the cytoplasm. It carries out the reaction Hydrolysis of proteins to small peptides in the presence of ATP and magnesium. alpha-casein is the usual test substrate. In the absence of ATP, only oligopeptides shorter than five residues are hydrolyzed (such as succinyl-Leu-Tyr-|-NHMec, and Leu-Tyr-Leu-|-Tyr-Trp, in which cleavage of the -Tyr-|-Leu- and -Tyr-|-Trp bonds also occurs).. Its function is as follows. Cleaves peptides in various proteins in a process that requires ATP hydrolysis. Has a chymotrypsin-like activity. Plays a major role in the degradation of misfolded proteins. In Neisseria meningitidis serogroup A / serotype 4A (strain DSM 15465 / Z2491), this protein is ATP-dependent Clp protease proteolytic subunit.